The following is a 129-amino-acid chain: Small ribosomal subunit protein uS11 (129 aa).

It belongs to the universal ribosomal protein uS11 family. In terms of assembly, part of the 30S ribosomal subunit. Interacts with proteins S7 and S18. Binds to IF-3.

Located on the platform of the 30S subunit, it bridges several disparate RNA helices of the 16S rRNA. Forms part of the Shine-Dalgarno cleft in the 70S ribosome. The protein is Small ribosomal subunit protein uS11 of Bacillus cereus (strain G9842).